The chain runs to 130 residues: Large ribosomal subunit protein eL32 (130 aa).

The protein belongs to the eukaryotic ribosomal protein eL32 family.

This chain is Large ribosomal subunit protein eL32 (rpl32e), found in Pyrococcus abyssi (strain GE5 / Orsay).